The following is a 219-amino-acid chain: 2-hydroxy-3-keto-5-methylthiopentenyl-1-phosphate phosphatase (219 aa).

It belongs to the HAD-like hydrolase superfamily. MtnX family.

The catalysed reaction is 2-hydroxy-5-methylsulfanyl-3-oxopent-1-enyl phosphate + H2O = 1,2-dihydroxy-5-(methylsulfanyl)pent-1-en-3-one + phosphate. It participates in amino-acid biosynthesis; L-methionine biosynthesis via salvage pathway; L-methionine from S-methyl-5-thio-alpha-D-ribose 1-phosphate: step 4/6. Functionally, dephosphorylates 2-hydroxy-3-keto-5-methylthiopentenyl-1-phosphate (HK-MTPenyl-1-P) yielding 1,2-dihydroxy-3-keto-5-methylthiopentene (DHK-MTPene). The chain is 2-hydroxy-3-keto-5-methylthiopentenyl-1-phosphate phosphatase from Bacillus cereus (strain 03BB102).